The sequence spans 2205 residues: Genome polyprotein (2205 aa).

Gly2 carries N-myristoyl glycine; by host lipidation. Residues 2–1518 lie on the Cytoplasmic side of the membrane; the sequence is GAQVSSQKVG…NINRAMTILQ (1517 aa). The amphipathic alpha-helix stretch occupies residues 579 to 599; the sequence is GLGDLIEGVVEGVTRNALTPL. Residues 598–613 show a composition bias toward polar residues; that stretch reads PLTPVNNLPDTRSSGP. The interval 598–619 is disordered; that stretch reads PLTPVNNLPDTRSSGPAHSKET. Residues His899 and Asp917 each act as for protease 2A activity in the active site. Residues Cys934 and Cys936 each coordinate Zn(2+). Residue Cys988 is the For protease 2A activity of the active site. Positions 994 and 996 each coordinate Zn(2+). A membrane-binding region spans residues 1126 to 1198; that stretch reads GDSWLKKFTE…HQSCPSQEHQ (73 aa). Residues 1126–1264 are oligomerization; that stretch reads GDSWLKKFTE…SPGTGKSVAT (139 aa). Positions 1147–1151 are RNA-binding; sequence SNKIS. The region spanning 1230 to 1386 is the SF3 helicase domain; that stretch reads EHTINNYVQF…SEYSRDGKLN (157 aa). An ATP-binding site is contributed by 1254 to 1261; the sequence is GSPGTGKS. Residues Cys1394, Cys1397, Cys1406, and Cys1411 each coordinate Zn(2+). The segment at 1394-1411 adopts a C4-type zinc-finger fold; the sequence is CKNCHQPANFKRCCPLVC. Residues 1438 to 1445 are RNA-binding; it reads ERNRRSSI. Residues 1449-1454 form an oligomerization region; that stretch reads MEALFQ. The stretch at 1519–1534 is an intramembrane region; the sequence is AVTTFAAVAGVVYVMY. Over 1535–2205 the chain is Cytoplasmic; the sequence is KLFAGHQGAY…TLYRRWLDSF (671 aa). Tyr1544 is subject to O-(5'-phospho-RNA)-tyrosine. The Peptidase C3 domain occupies 1564-1742; it reads GPGFDYAVAM…FAAALKRSYF (179 aa). Residues His1603, Glu1634, and Cys1710 each act as for protease 3C activity in the active site. Residues 1971–2086 enclose the RdRp catalytic domain; it reads MEEKLFDYTG…SYPHEVDASL (116 aa). Mg(2+) contacts are provided by Asp1977 and Asp2072.

Belongs to the picornaviruses polyprotein family. In terms of assembly, interacts with capsid protein VP1 and capsid protein VP3 to form heterotrimeric protomers. As to quaternary structure, interacts with capsid protein VP0, and capsid protein VP3 to form heterotrimeric protomers. Interacts with human PVR. Five protomers subsequently associate to form pentamers which serve as building blocks for the capsid. Interacts with capsid protein VP2, capsid protein VP3 and capsid protein VP4 following cleavage of capsid protein VP0. Interacts with capsid protein VP1 and capsid protein VP3 in the mature capsid. In terms of assembly, interacts with capsid protein VP0 and capsid protein VP1 to form heterotrimeric protomers. Five protomers subsequently associate to form pentamers which serve as building blocks for the capsid. Interacts with capsid protein VP4 in the mature capsid. Interacts with protein 2C; this interaction may be important for virion morphogenesis. As to quaternary structure, interacts with capsid protein VP1 and capsid protein VP3. Homodimer. In terms of assembly, homohexamer; forms a hexameric ring structure with 6-fold symmetry characteristic of AAA+ ATPases. Interacts (via N-terminus) with host RTN3 (via reticulon domain); this interaction is important for viral replication. Interacts with capsid protein VP3; this interaction may be important for virion morphogenesis. As to quaternary structure, interacts with protein 3CD. Homodimer. Interacts with host GBF1. Interacts (via GOLD domain) with host ACBD3 (via GOLD domain); this interaction allows the formation of a viral protein 3A/ACBD3 heterotetramer with a 2:2 stoichiometry, which will stimulate the recruitment of host PI4KB in order to synthesize PI4P at the viral RNA replication sites. In terms of assembly, interacts with RNA-directed RNA polymerase. As to quaternary structure, interacts with protein 3AB and with RNA-directed RNA polymerase. Interacts with Viral protein genome-linked and with protein 3CD. Requires Mg(2+) as cofactor. Specific enzymatic cleavages in vivo by the viral proteases yield processing intermediates and the mature proteins. Post-translationally, myristoylation is required for the formation of pentamers during virus assembly. Further assembly of 12 pentamers and a molecule of genomic RNA generates the provirion. In terms of processing, during virion maturation, immature virions are rendered infectious following cleavage of VP0 into VP4 and VP2. This maturation seems to be an autocatalytic event triggered by the presence of RNA in the capsid and it is followed by a conformational change infectious virion. Myristoylation is required during RNA encapsidation and formation of the mature virus particle. Post-translationally, VPg is uridylylated by the polymerase into VPg-pUpU. This acts as a nucleotide-peptide primer for the genomic RNA replication.

Its subcellular location is the virion. It localises to the host cytoplasm. The protein resides in the host cytoplasmic vesicle membrane. The protein localises to the host nucleus. It catalyses the reaction a ribonucleoside 5'-triphosphate + H2O = a ribonucleoside 5'-diphosphate + phosphate + H(+). The enzyme catalyses Selective cleavage of Tyr-|-Gly bond in the picornavirus polyprotein.. The catalysed reaction is RNA(n) + a ribonucleoside 5'-triphosphate = RNA(n+1) + diphosphate. It carries out the reaction Selective cleavage of Gln-|-Gly bond in the poliovirus polyprotein. In other picornavirus reactions Glu may be substituted for Gln, and Ser or Thr for Gly.. Replication or transcription is subject to high level of random mutations by the nucleotide analog ribavirin. Forms an icosahedral capsid of pseudo T=3 symmetry with capsid proteins VP2 and VP3. The capsid is 300 Angstroms in diameter, composed of 60 copies of each capsid protein and enclosing the viral positive strand RNA genome. Capsid protein VP1 mainly forms the vertices of the capsid. Capsid protein VP1 interacts with host cell receptor PVR to provide virion attachment to target host cells. This attachment induces virion internalization predominantly through clathrin- and caveolin-independent endocytosis in Hela cells and through caveolin-mediated endocytosis in brain microvascular endothelial cells. Tyrosine kinases are probably involved in the entry process. Virus binding to PVR induces increased junctional permeability and rearrangement of junctional proteins. Modulation of endothelial tight junctions, as well as cytolytic infection of endothelial cells themselves, may result in loss of endothelial integrity which may help the virus to reach the CNS. After binding to its receptor, the capsid undergoes conformational changes. Capsid protein VP1 N-terminus (that contains an amphipathic alpha-helix) and capsid protein VP4 are externalized. Together, they shape a pore in the host membrane through which viral genome is translocated to host cell cytoplasm. Its function is as follows. Forms an icosahedral capsid of pseudo T=3 symmetry with capsid proteins VP2 and VP3. The capsid is 300 Angstroms in diameter, composed of 60 copies of each capsid protein and enclosing the viral positive strand RNA genome. Functionally, lies on the inner surface of the capsid shell. After binding to the host receptor, the capsid undergoes conformational changes. Capsid protein VP4 is released, Capsid protein VP1 N-terminus is externalized, and together, they shape a pore in the host membrane through which the viral genome is translocated into the host cell cytoplasm. In terms of biological role, component of immature procapsids, which is cleaved into capsid proteins VP4 and VP2 after maturation. Allows the capsid to remain inactive before the maturation step. Cysteine protease that cleaves viral polyprotein and specific host proteins. It is responsible for the autocatalytic cleavage between the P1 and P2 regions, which is the first cleavage occurring in the polyprotein. Also cleaves the host translation initiation factor EIF4G1, in order to shut down the capped cellular mRNA translation. Inhibits the host nucleus-cytoplasm protein and RNA trafficking by cleaving host members of the nuclear pores including NUP98, NUP62 and NUP153. Counteracts stress granule formation probably by antagonizing its assembly or promoting its dissassembly. Cleaves and inhibits host IFIH1/MDA5, thereby inhibiting the type-I IFN production and the establishment of the antiviral state. Cleaves and inhibits host MAVS, thereby inhibiting the type-I IFN production and the establishment of the antiviral state. Its function is as follows. Plays an essential role in the virus replication cycle by acting as a viroporin. Creates a pore in the host endoplasmic reticulum and as a consequence releases Ca2+ in the cytoplasm of infected cell. In turn, high levels of cytoplasmic calcium may trigger membrane trafficking and transport of viral ER-associated proteins to viroplasms, sites of viral genome replication. Functionally, induces and associates with structural rearrangements of intracellular membranes. Displays RNA-binding, nucleotide binding and NTPase activities. May play a role in virion morphogenesis and viral RNA encapsidation by interacting with the capsid protein VP3. In terms of biological role, localizes the viral replication complex to the surface of membranous vesicles. Together with protein 3CD binds the Cis-Active RNA Element (CRE) which is involved in RNA synthesis initiation. Acts as a cofactor to stimulate the activity of 3D polymerase, maybe through a nucleid acid chaperone activity. Localizes the viral replication complex to the surface of membranous vesicles. It inhibits host cell endoplasmic reticulum-to-Golgi apparatus transport and causes the disassembly of the Golgi complex, possibly through GBF1 interaction. This would result in depletion of MHC, trail receptors and IFN receptors at the host cell surface. Plays an essential role in viral RNA replication by recruiting ACBD3 and PI4KB at the viral replication sites, thereby allowing the formation of the rearranged membranous structures where viral replication takes place. Its function is as follows. Acts as a primer for viral RNA replication and remains covalently bound to viral genomic RNA. VPg is uridylylated prior to priming replication into VPg-pUpU. The oriI viral genomic sequence may act as a template for this. The VPg-pUpU is then used as primer on the genomic RNA poly(A) by the RNA-dependent RNA polymerase to replicate the viral genome. During genome replication, the VPg-RNA linkage is removed by the host TDP2, thereby accelerating replication. During the late stage of the replication cycle, host TDP2 is excluded from sites of viral RNA synthesis and encapsidation, allowing for the generation of progeny virions. Functionally, involved in the viral replication complex and viral polypeptide maturation. It exhibits protease activity with a specificity and catalytic efficiency that is different from protease 3C. Protein 3CD lacks polymerase activity. Protein 3CD binds to the 5'UTR of the viral genome. In terms of biological role, major viral protease that mediates proteolytic processing of the polyprotein. Cleaves host EIF5B, contributing to host translation shutoff. Also cleaves host PABPC1, contributing to host translation shutoff. Cleaves host RIGI and thus contributes to the inhibition of type I interferon production. Cleaves host NLRP1, triggers host N-glycine-mediated degradation of the autoinhibitory NLRP1 N-terminal fragment. Inhibits the integrated stress response (ISR) in the infected cell by cleaving host G3BP1. Stress granule formation is thus inhibited, which allows protein synthesis and viral replication. Replicates the viral genomic RNA on the surface of intracellular membranes. May form linear arrays of subunits that propagate along a strong head-to-tail interaction called interface-I. Covalently attaches UMP to a tyrosine of VPg, which is used to prime RNA synthesis. The positive stranded RNA genome is first replicated at virus induced membranous vesicles, creating a dsRNA genomic replication form. This dsRNA is then used as template to synthesize positive stranded RNA genomes. ss(+)RNA genomes are either translated, replicated or encapsidated. The polypeptide is Genome polyprotein (Homo sapiens (Human)).